The chain runs to 621 residues: Phosphomethylpyrimidine synthase (621 aa).

Over residues 1–23 (MTAPFLSSLSPTSPLASATAPFP) the composition is skewed to low complexity. Positions 1 to 29 (MTAPFLSSLSPTSPLASATAPFPGSRKVY) are disordered. Residues Asn-215, Met-244, Tyr-273, His-309, 329–331 (SRG), 370–373 (DGLR), and Glu-409 each bind substrate. His-413 is a binding site for Zn(2+). A substrate-binding site is contributed by Tyr-436. A Zn(2+)-binding site is contributed by His-477. The [4Fe-4S] cluster site is built by Cys-557, Cys-560, and Cys-565.

It belongs to the ThiC family. Homodimer. The cofactor is [4Fe-4S] cluster.

It carries out the reaction 5-amino-1-(5-phospho-beta-D-ribosyl)imidazole + S-adenosyl-L-methionine = 4-amino-2-methyl-5-(phosphooxymethyl)pyrimidine + CO + 5'-deoxyadenosine + formate + L-methionine + 3 H(+). Its pathway is cofactor biosynthesis; thiamine diphosphate biosynthesis. Functionally, catalyzes the synthesis of the hydroxymethylpyrimidine phosphate (HMP-P) moiety of thiamine from aminoimidazole ribotide (AIR) in a radical S-adenosyl-L-methionine (SAM)-dependent reaction. This is Phosphomethylpyrimidine synthase from Rhodospirillum rubrum (strain ATCC 11170 / ATH 1.1.1 / DSM 467 / LMG 4362 / NCIMB 8255 / S1).